The following is a 90-amino-acid chain: uncharacterized protein (90 aa).

The disordered stretch occupies residues 62-90; it reads RQLKKKQAYKPDPEASFSWSANTSTRGRR. Residues 78 to 90 are compositionally biased toward polar residues; it reads FSWSANTSTRGRR.

This is an uncharacterized protein from Escherichia coli (strain K12).